A 487-amino-acid chain; its full sequence is L-tartrate/succinate antiporter (487 aa).

The Periplasmic portion of the chain corresponds to 1–9 (MKPSTEWWR). Residues 10-30 (YLAPLAVIAIIALLPVPAGLE) traverse the membrane as a helical segment. Residues 31–32 (NH) are Cytoplasmic-facing. A run of 2 helical transmembrane segments spans residues 33-53 (TWLY…EPVP) and 54-74 (GAVV…WLLF). The Cytoplasmic portion of the chain corresponds to 75 to 92 (SPEQLAQPGFKFTAKSLS). A helical membrane pass occupies residues 93-113 (WAVSGFSNSVIWLIFAAFMFG). Topologically, residues 114-136 (TGYEKTGLGRRIALILVKKMGHR) are periplasmic. Residues 137–157 (TLFLGYAVMFSELILAPVTPS) traverse the membrane as a helical segment. The Cytoplasmic segment spans residues 158-188 (NSARGAGIIYPIIRNLPPLYQSQPNDSSSRS). A helical transmembrane segment spans residues 189–209 (IGSYIMWMGIVADCVTSAIFL). The Periplasmic portion of the chain corresponds to 210 to 235 (TAMAPNLLLIGLMKSASHATLSWGDW). Residues 236 to 256 (FLGMLPLSILLVLLVPWLAYV) traverse the membrane as a helical segment. At 257 to 291 (LYPPVLKSGDQVPRWAETELQAMGPLCSREKRMLG) the chain is on the cytoplasmic side. Transmembrane regions (helical) follow at residues 292–312 (LMVG…AAMV) and 313–333 (GYSV…DIVS). At 334–339 (NKAAWN) the chain is on the cytoplasmic side. The chain crosses the membrane as a helical span at residues 340 to 360 (VFFWLASLITLATGLNNTGFI). The Periplasmic segment spans residues 361–369 (SWFGKLLAG). Residues 370 to 390 (SLSGYSPTMVMVALIVVFYLL) traverse the membrane as a helical segment. The Cytoplasmic portion of the chain corresponds to 391-392 (RY). A helical transmembrane segment spans residues 393-413 (FFASATAYTSALAPMMIAAAL). At 414–417 (AMPE) the chain is on the periplasmic side. A helical transmembrane segment spans residues 418–438 (IPLPVFCLMVGAAIGLGSILT). Residues 439-464 (PYATGPSPIYYGSGYLPTADYWRLGA) lie on the Cytoplasmic side of the membrane. Residues 465–485 (IFGLIFLVLLVITGLLWMPVV) form a helical membrane-spanning segment. The Periplasmic portion of the chain corresponds to 486–487 (LL).

The protein belongs to the SLC13A/DASS transporter (TC 2.A.47) family. DIT1 subfamily.

Its subcellular location is the cell inner membrane. It catalyses the reaction (2R,3R)-tartrate(out) + succinate(in) = (2R,3R)-tartrate(in) + succinate(out). Its function is as follows. Catalyzes the uptake of tartrate in exchange for intracellular succinate. Essential for anaerobic L-tartrate fermentation. This Escherichia coli (strain K12) protein is L-tartrate/succinate antiporter.